We begin with the raw amino-acid sequence, 173 residues long: Protein-export protein SecB (173 aa).

The disordered stretch occupies residues 148–173; it reads QQQKQRREQGTSDSAPSGSPDNGGRQ. The span at 158-167 shows a compositional bias: polar residues; the sequence is TSDSAPSGSP.

It belongs to the SecB family. In terms of assembly, homotetramer, a dimer of dimers. One homotetramer interacts with 1 SecA dimer.

The protein resides in the cytoplasm. Its function is as follows. One of the proteins required for the normal export of preproteins out of the cell cytoplasm. It is a molecular chaperone that binds to a subset of precursor proteins, maintaining them in a translocation-competent state. It also specifically binds to its receptor SecA. This is Protein-export protein SecB from Halorhodospira halophila (strain DSM 244 / SL1) (Ectothiorhodospira halophila (strain DSM 244 / SL1)).